We begin with the raw amino-acid sequence, 866 residues long: Sphingomyelin phosphodiesterase 4 (866 aa).

Residues Ser169 and Ser285 each carry the phosphoserine modification. Thr708 carries the phosphothreonine modification. At Ser792 the chain carries Phosphoserine. A helical transmembrane segment spans residues 822–842; the sequence is LLLAFFVASLFCVGPLPCTLL.

Mg(2+) serves as cofactor. Widely expressed, with highest levels in heart and skeletal muscle. As to expression, expressed in skeletal muscle (at protein level). In terms of tissue distribution, expressed in skeletal muscle but a lower levels than isoform 1 (at protein level).

It localises to the endoplasmic reticulum membrane. Its subcellular location is the golgi apparatus membrane. The protein localises to the nucleus envelope. It is found in the cell membrane. The protein resides in the sarcolemma. The enzyme catalyses a sphingomyelin + H2O = phosphocholine + an N-acylsphing-4-enine + H(+). Activated by phosphatidylserine and tumor necrosis factor (TNF). Inhibited by scyphostatin. Catalyzes the hydrolysis of membrane sphingomyelin to form phosphorylcholine and ceramide. It has a relevant role in the homeostasis of membrane sphingolipids, thereby influencing membrane integrity, and endoplasmic reticulum organization and function. May sensitize cells to DNA damage-induced apoptosis. In skeletal muscle, mediates TNF-stimulated oxidant production. The chain is Sphingomyelin phosphodiesterase 4 from Homo sapiens (Human).